The primary structure comprises 131 residues: Small ribosomal subunit protein uS8 (131 aa).

It belongs to the universal ribosomal protein uS8 family. As to quaternary structure, part of the 30S ribosomal subunit. Contacts proteins S5 and S12.

In terms of biological role, one of the primary rRNA binding proteins, it binds directly to 16S rRNA central domain where it helps coordinate assembly of the platform of the 30S subunit. This Wolbachia sp. subsp. Brugia malayi (strain TRS) protein is Small ribosomal subunit protein uS8.